Here is a 412-residue protein sequence, read N- to C-terminus: Aurora kinase (412 aa).

The interval 94-119 is disordered; the sequence is NEKVRPSKSSHIPVKSPIRKKGHSPA. The region spanning 148–401 is the Protein kinase domain; it reads FEIGKVLGKG…LAEVMNHPWI (254 aa). Residues 154-162 and lysine 177 each bind ATP; that span reads LGKGKLGKV. Residue aspartate 271 is the Proton acceptor of the active site.

It belongs to the protein kinase superfamily. Ser/Thr protein kinase family. Aurora subfamily.

The protein resides in the nucleus. The protein localises to the cytoplasm. It localises to the cytoskeleton. It is found in the spindle. Its subcellular location is the chromosome. The protein resides in the centromere. The protein localises to the kinetochore. It catalyses the reaction L-seryl-[protein] + ATP = O-phospho-L-seryl-[protein] + ADP + H(+). The enzyme catalyses L-threonyl-[protein] + ATP = O-phospho-L-threonyl-[protein] + ADP + H(+). Component of the chromosomal passenger complex (CPC), a complex that acts as a key regulator of chromosome segregation and cytokinesis. Has a role in error-correction of aberrent kinetochore-microtubule attachments to ensure that sister kinetochores become bioriented and connect to opposite poles by promoting spindle assembly checkpoint signaling. The sequence is that of Aurora kinase (IPL1) from Debaryomyces hansenii (strain ATCC 36239 / CBS 767 / BCRC 21394 / JCM 1990 / NBRC 0083 / IGC 2968) (Yeast).